A 268-amino-acid chain; its full sequence is TodF product hydratase (268 aa).

The protein belongs to the hydratase/decarboxylase family.

It functions in the pathway xenobiotic degradation; toluene degradation. Converts the product of 2-hydroxy-6-oxo-2,4-heptadienoate hydrolase. The sequence is that of TodF product hydratase (todJ) from Pseudomonas putida (strain ATCC 700007 / DSM 6899 / JCM 31910 / BCRC 17059 / LMG 24140 / F1).